The sequence spans 539 residues: 2,3-dihydroxybenzoate-AMP ligase (539 aa).

G191 contacts ATP. Substrate contacts are provided by residues 234-235 (HN) and S240. The ATP site is built by G307, V329, D413, R428, and K519. Substrate is bound at residue K519.

Belongs to the ATP-dependent AMP-binding enzyme family.

It is found in the cytoplasm. The catalysed reaction is 2,3-dihydroxybenzoate + holo-[ACP] + ATP = 2,3-dihydroxybenzoyl-[ACP] + AMP + diphosphate. Its pathway is siderophore biosynthesis; bacillibactin biosynthesis. Functionally, involved in the biosynthesis of the catecholic siderophore bacillibactin. Catalyzes the activation of the carboxylate group of 2,3-dihydroxy-benzoate (DHB), via ATP-dependent PPi exchange reactions, to the acyladenylate. The protein is 2,3-dihydroxybenzoate-AMP ligase of Bacillus subtilis (strain 168).